A 7570-amino-acid chain; its full sequence is Dystonin (7570 aa).

Calponin-homology (CH) domains follow at residues 35 to 138 (KVQK…LHFQ) and 151 to 255 (MSAK…DAFP). Residues 35-252 (KVQKKTFTKW…VITYVSSLYD (218 aa)) are actin-binding. Residues Leu-135, Lys-184, Ser-236, and Ser-237 each carry the phosphoserine modification. Spectrin repeat units follow at residues 602 to 699 (EINM…RHLD) and 701 to 802 (LHNF…QHIK). One can recognise an SH3 domain in the interval 887–944 (KTSIPIKAICDYRQIEITIYKDDECVLANNSHRAKWKVISPTGNEAMVPSVCFTVPPP). Spectrin repeat units follow at residues 1293–1422 (KYYR…KFAG) and 1440–1540 (KEHV…QESQ). Ser-1382 carries the phosphoserine modification. Residues 1383–1389 (PVKRRRM) carry the Nuclear localization signal; in isoform 6 motif. Glu-1565 is subject to Phosphoserine. Plectin repeat units lie at residues 1584 to 1626 (IRLL…QLKE), 1660 to 1703 (KVLE…LERQ), 1774 to 1817 (RLLS…LTYQ), 1818 to 1855 (VQTG…LEAQ), and 1856 to 1891 (RGYV…KILN). Residue Ser-2229 is modified to Phosphoserine. Disordered regions lie at residues 2317–2346 (SNTS…IEEY), 2383–2441 (LLND…DETA), and 2585–2616 (DYIY…GKPR). Residues 2336 to 2345 (DKEDESEIEE) show a composition bias toward acidic residues. Residues 2385–2394 (NDQQNNTGTD) are compositionally biased toward low complexity. Acidic residues-rich tracts occupy residues 2395-2412 (TDSD…DDDH), 2430-2439 (YDTLQEENDE), and 2591-2605 (NDQD…DEEG). Ser-2919 is modified (phosphoserine). The segment at 3190-3221 (EASTVPSDSQMSDSSGVSPMTNSSELKPESRD) is disordered. Residues 3192–3209 (STVPSDSQMSDSSGVSPM) show a composition bias toward low complexity. 28 Spectrin repeats span residues 3395–3501 (LQHT…KQIM), 3643–3752 (QEYK…KELD), 3926–4040 (EKFD…NNLK), 4047–4153 (QHYE…EKLQ), 4160–4259 (LSVQ…ETLA), 4269–4368 (ELFE…EAVT), 4516–4621 (QKAQ…QKLE), 4628–4732 (TQFQ…DWID), 4742–4842 (QSLL…QHLQ), 4849–4951 (HQFQ…NKLK), 4958–5058 (LKYK…FCLE), 5068–5167 (QEVS…SFLE), 5174–5277 (GHFQ…EQVE), 5284–5388 (EEFY…AQLQ), 5395–5497 (GRFQ…RQLE), 5504–5715 (QQFH…KTLE), 5831–5933 (QQFD…LQLE), 5941–6041 (QFWE…VALD), 6048–6154 (TQFH…AKLL), 6161–6263 (EKFW…DKLE), 6270–6373 (VQYQ…HKLE), 6380–6482 (GQFQ…QQLD), 6489–6591 (KGFH…TKLE), 6598–6700 (MEFH…RSLD), 6707–6810 (KQFH…NKLE), 6817–6918 (GQFT…TRLE), 6925–7027 (EEFH…QRLA), and 7037–7167 (QELL…RKLN). Ser-3968 carries the post-translational modification Phosphoserine. Ser-4749 bears the Phosphoserine mark. Lys-5470 participates in a covalent cross-link: Glycyl lysine isopeptide (Lys-Gly) (interchain with G-Cter in ubiquitin). EF-hand domains follow at residues 7197–7232 (HKKS…SKFP) and 7233–7268 (TSRL…NKDA). 10 residues coordinate Ca(2+): Asp-7210, Asp-7212, Asp-7214, Lys-7216, Glu-7221, Asp-7246, Asp-7248, Asp-7250, Tyr-7252, and Glu-7257. A GAR domain is found at 7273-7351 (TDADKIEDEV…EFLVKNDPCR (79 aa)). 3 disordered regions span residues 7358 to 7379 (KMLR…AKGR), 7395 to 7452 (SQGM…SKLR), and 7481 to 7570 (QFAD…SSKR). Residues 7362–7374 (SESNSSITTTQPT) show a composition bias toward polar residues. Composition is skewed to low complexity over residues 7411–7441 (SSRG…TTTP) and 7490–7504 (SRPG…GSRA). Ser-7432 carries the post-translational modification Phosphoserine. Phosphoserine is present on residues Ser-7510, Ser-7513, and Ser-7525. The segment covering 7519–7535 (EIQSVCSDVETVPQTHR) has biased composition (polar residues). The short motif at 7550-7553 (SKIP) is the Microtubule tip localization signal element.

In terms of assembly, homodimer. Isoform 1 interacts (via N-terminus) with PLEC (via N-terminus). Interacts with the neuronal intermediate filament protein, PRPH. Interacts with DES. Interacts with SYNE3. Isoform 1 and isoform 6 can homodimerize (via N-terminus). Isoform 1 interacts (via N-terminus) with ACTN2. Isoform 1 interacts (via N-terminus) with PLEC (via N-terminus). Isoform 3 interacts (via N-terminus) with COL17A1 (via cytoplasmic region). Isoform 3 interacts (via N-terminus) with ITGB4 isoform beta-4a (via cytoplasmic region). Isoform 3 interacts (via N-terminus) with ERBIN (via C-terminus). Isoform 3 associates (via C-terminal) with KRT5-KRT14 (via rod region) intermediate filaments of keratins. Interacts with MAPRE1; probably required for targeting to the growing microtubule plus ends. Interacts with TMIGD2. Isoform 9 interacts with TMEM108. Isoform 1 is expressed in myoblasts (at protein level). Isoform 3 is expressed in the skin. Isoform 6 is expressed in the brain. Highly expressed in skeletal muscle and cultured keratinocytes.

The protein resides in the cytoplasm. The protein localises to the cytoskeleton. It is found in the stress fiber. Its subcellular location is the cell projection. It localises to the axon. The protein resides in the myofibril. The protein localises to the sarcomere. It is found in the z line. Its subcellular location is the h zone. It localises to the cell junction. The protein resides in the hemidesmosome. The protein localises to the nucleus. It is found in the nucleus envelope. Its subcellular location is the membrane. It localises to the endoplasmic reticulum membrane. The protein resides in the cell cortex. The protein localises to the cell membrane. In terms of biological role, cytoskeletal linker protein. Acts as an integrator of intermediate filaments, actin and microtubule cytoskeleton networks. Required for anchoring either intermediate filaments to the actin cytoskeleton in neural and muscle cells or keratin-containing intermediate filaments to hemidesmosomes in epithelial cells. The proteins may self-aggregate to form filaments or a two-dimensional mesh. Regulates the organization and stability of the microtubule network of sensory neurons to allow axonal transport. Mediates docking of the dynein/dynactin motor complex to vesicle cargos for retrograde axonal transport through its interaction with TMEM108 and DCTN1. Functionally, plays a structural role in the assembly of hemidesmosomes of epithelial cells; anchors keratin-containing intermediate filaments to the inner plaque of hemidesmosomes. Required for the regulation of keratinocyte polarity and motility; mediates integrin ITGB4 regulation of RAC1 activity. Required for bundling actin filaments around the nucleus. Its function is as follows. Regulates the organization and stability of the microtubule network of sensory neurons to allow axonal transport. In Homo sapiens (Human), this protein is Dystonin.